A 224-amino-acid polypeptide reads, in one-letter code: Ribose-5-phosphate isomerase A (224 aa).

Substrate-binding positions include 33–36, 86–89, and 99–102; these read TGST, DGAD, and KGGG. The Proton acceptor role is filled by Glu108. Lys126 contacts substrate.

The protein belongs to the ribose 5-phosphate isomerase family. Homodimer.

It carries out the reaction aldehydo-D-ribose 5-phosphate = D-ribulose 5-phosphate. It functions in the pathway carbohydrate degradation; pentose phosphate pathway; D-ribose 5-phosphate from D-ribulose 5-phosphate (non-oxidative stage): step 1/1. Its function is as follows. Catalyzes the reversible conversion of ribose-5-phosphate to ribulose 5-phosphate. The sequence is that of Ribose-5-phosphate isomerase A from Bordetella avium (strain 197N).